A 226-amino-acid polypeptide reads, in one-letter code: MGIRAIVVDTAGTTTDLNFIQDVLFPYSVKALPDFLEQNQHNVLVENCICDTRDIALEPDADLARVTEILQQWVSEDRKATPLKTLQGLIWKQGYAHGEFKGHIFPDFIEAVKRFSAQNLRIYSFSSGSVDAQKLLFSHSDGGDLTEMFNGHFDTRTGNKLDKQAYCNILNTISLSPKQVLFVSDVIEELKAAEAAGMMTCQMVRDSTLRTGEFRKISSFDELLIE.

Belongs to the HAD-like hydrolase superfamily. MasA/MtnC family. As to quaternary structure, monomer. Mg(2+) serves as cofactor.

The catalysed reaction is 5-methylsulfanyl-2,3-dioxopentyl phosphate + H2O = 1,2-dihydroxy-5-(methylsulfanyl)pent-1-en-3-one + phosphate. Its pathway is amino-acid biosynthesis; L-methionine biosynthesis via salvage pathway; L-methionine from S-methyl-5-thio-alpha-D-ribose 1-phosphate: step 3/6. It participates in amino-acid biosynthesis; L-methionine biosynthesis via salvage pathway; L-methionine from S-methyl-5-thio-alpha-D-ribose 1-phosphate: step 4/6. Functionally, bifunctional enzyme that catalyzes the enolization of 2,3-diketo-5-methylthiopentyl-1-phosphate (DK-MTP-1-P) into the intermediate 2-hydroxy-3-keto-5-methylthiopentenyl-1-phosphate (HK-MTPenyl-1-P), which is then dephosphorylated to form the acireductone 1,2-dihydroxy-3-keto-5-methylthiopentene (DHK-MTPene). This is Enolase-phosphatase E1 from Shewanella baltica (strain OS155 / ATCC BAA-1091).